Here is a 141-residue protein sequence, read N- to C-terminus: ATP synthase F(0) complex subunit C2, mitochondrial (141 aa).

Residues 1-66 (MFACSKFVST…RSFQTSAISR (66 aa)) constitute a mitochondrion transit peptide. The helical transmembrane segment at 82 to 102 (VGVAGSGAGIGTVFGSLIIGY) threads the bilayer. N6,N6,N6-trimethyllysine is present on Lys-109. The helical transmembrane segment at 117 to 137 (ILGFALSEAMGLFCLMVAFLI) threads the bilayer.

Belongs to the ATPase C chain family. As to quaternary structure, F-type ATPases have 2 components, CF(1) - the catalytic core - and CF(0) - the membrane proton channel. CF(1) has five subunits: alpha(3), beta(3), gamma(1), delta(1), epsilon(1). CF(0) has three main subunits: a, b and c. Interacts with DNAJC30; interaction is direct. Post-translationally, trimethylated by ATPSCKMT at Lys-109. Methylation is required for proper incorporation of the C subunit into the ATP synthase complex and mitochondrial respiration.

The protein resides in the mitochondrion membrane. Functionally, mitochondrial membrane ATP synthase (F(1)F(0) ATP synthase or Complex V) produces ATP from ADP in the presence of a proton gradient across the membrane which is generated by electron transport complexes of the respiratory chain. F-type ATPases consist of two structural domains, F(1) - containing the extramembraneous catalytic core and F(0) - containing the membrane proton channel, linked together by a central stalk and a peripheral stalk. During catalysis, ATP synthesis in the catalytic domain of F(1) is coupled via a rotary mechanism of the central stalk subunits to proton translocation. Part of the complex F(0) domain. A homomeric c-ring of probably 10 subunits is part of the complex rotary element. This chain is ATP synthase F(0) complex subunit C2, mitochondrial, found in Homo sapiens (Human).